The sequence spans 27 residues: Conotoxin Bt9.2 (27 aa).

Cystine bridges form between C2/C16, C6/C19, and C12/C24. A 4-hydroxyproline modification is found at P13.

In terms of tissue distribution, expressed by the venom duct.

It localises to the secreted. Its function is as follows. Probable neurotoxin that inhibits ion channels. The chain is Conotoxin Bt9.2 from Conus betulinus (Beech cone).